We begin with the raw amino-acid sequence, 418 residues long: Glutamyl-tRNA reductase (418 aa).

Substrate is bound by residues 49 to 52 (TCNR), Ser107, 112 to 114 (EPQ), and Gln118. Cys50 serves as the catalytic Nucleophile. 187 to 192 (GAGETI) is a binding site for NADP(+).

The protein belongs to the glutamyl-tRNA reductase family. In terms of assembly, homodimer.

It carries out the reaction (S)-4-amino-5-oxopentanoate + tRNA(Glu) + NADP(+) = L-glutamyl-tRNA(Glu) + NADPH + H(+). It participates in porphyrin-containing compound metabolism; protoporphyrin-IX biosynthesis; 5-aminolevulinate from L-glutamyl-tRNA(Glu): step 1/2. Functionally, catalyzes the NADPH-dependent reduction of glutamyl-tRNA(Glu) to glutamate 1-semialdehyde (GSA). The sequence is that of Glutamyl-tRNA reductase from Vibrio campbellii (strain ATCC BAA-1116).